A 487-amino-acid polypeptide reads, in one-letter code: MKALDELIFDNRFARLGDAFSTSVLPEPIDAPQLVVASQSALALLDLAPEQADLPLFAEIFSGHKLWSEAEPRAMVYSGHQFGSYNPRLGDGRGLLLGEVYNDAGEHWDLHLKGAGRTPYSRMGDGRAVLRSSIREFLASEVLHALGIPSSRAGCVVSSSTPVWRETQEHAAMVLRLAQSHVRFGSLEYFFYTKQPEQLKTLAEHVLTMHYPHCQEQPEPYLAMFREIVERNAELIAKWQAYGFCHGVMNTDNMSILGITFDFGPFAFLDDFDEHFICNHSDHEGRYSFSNQVPIAQWNLSALAQALTPFISVDALREAIGLFLPLYQAHYLDLMRRRLGLTVAHEQDEQLVSQLLKLMQNSGVDYTLFFRRLGDQPAAEALRTLRDDFVDIKGFDGWAQAYQARIALENNGTEQERQTRMHAVNPLYILRNYLAQNAIAAAEKGDYAEVRRLHQVLCTPFTEQPGMQGYAQRPPDWGKHLEISCSS.

The ATP site is built by G90, G92, R93, K113, D125, G126, R176, and R183. D252 functions as the Proton acceptor in the catalytic mechanism. Mg(2+) is bound by residues N253 and D262. D262 is an ATP binding site.

It belongs to the SELO family. Mg(2+) serves as cofactor. Mn(2+) is required as a cofactor.

The enzyme catalyses L-seryl-[protein] + ATP = 3-O-(5'-adenylyl)-L-seryl-[protein] + diphosphate. It carries out the reaction L-threonyl-[protein] + ATP = 3-O-(5'-adenylyl)-L-threonyl-[protein] + diphosphate. The catalysed reaction is L-tyrosyl-[protein] + ATP = O-(5'-adenylyl)-L-tyrosyl-[protein] + diphosphate. It catalyses the reaction L-histidyl-[protein] + UTP = N(tele)-(5'-uridylyl)-L-histidyl-[protein] + diphosphate. The enzyme catalyses L-seryl-[protein] + UTP = O-(5'-uridylyl)-L-seryl-[protein] + diphosphate. It carries out the reaction L-tyrosyl-[protein] + UTP = O-(5'-uridylyl)-L-tyrosyl-[protein] + diphosphate. Its function is as follows. Nucleotidyltransferase involved in the post-translational modification of proteins. It can catalyze the addition of adenosine monophosphate (AMP) or uridine monophosphate (UMP) to a protein, resulting in modifications known as AMPylation and UMPylation. In Pseudomonas syringae pv. syringae (strain B728a), this protein is Protein nucleotidyltransferase YdiU.